The primary structure comprises 399 residues: Phosphoglycerate kinase (399 aa).

Substrate contacts are provided by residues 22-24, R38, 61-64, R119, and R152; these read DFN and HLGR. Residues K205, G296, E327, and 353-356 each bind ATP; that span reads GGDT.

The protein belongs to the phosphoglycerate kinase family. As to quaternary structure, monomer.

Its subcellular location is the cytoplasm. The catalysed reaction is (2R)-3-phosphoglycerate + ATP = (2R)-3-phospho-glyceroyl phosphate + ADP. It participates in carbohydrate degradation; glycolysis; pyruvate from D-glyceraldehyde 3-phosphate: step 2/5. In Nitratiruptor sp. (strain SB155-2), this protein is Phosphoglycerate kinase.